We begin with the raw amino-acid sequence, 345 residues long: NADPH dehydrogenase (345 aa).

23–26 (SPMC) lines the FMN pocket. Y28 is a binding site for substrate. 2 residues coordinate FMN: A60 and Q102. 164 to 167 (HGAH) serves as a coordination point for substrate. FMN is bound by residues R215 and 307-308 (GR).

Belongs to the NADH:flavin oxidoreductase/NADH oxidase family. NamA subfamily. In terms of assembly, homotetramer. FMN is required as a cofactor.

The catalysed reaction is A + NADPH + H(+) = AH2 + NADP(+). Functionally, catalyzes the reduction of the double bond of an array of alpha,beta-unsaturated aldehydes and ketones. It also reduces the nitro group of nitroester and nitroaromatic compounds. It could have a role in detoxification processes. The protein is NADPH dehydrogenase of Bacillus cereus (strain ZK / E33L).